Consider the following 238-residue polypeptide: Transcriptional activator HAC1 (238 aa).

Positions 1 to 39 (MEMTDFELTSNSQSNLAIPTNFKSTLPPRKRAKTKEEKE) are disordered. Residues 7–24 (ELTSNSQSNLAIPTNFKS) are compositionally biased toward polar residues. A bZIP domain is found at 39 to 102 (EQRRIERILR…LTCSHDAFVA (64 aa)). The basic motif stretch occupies residues 41 to 61 (RRIERILRNRRAAHQSREKKR). The leucine-zipper stretch occupies residues 67–74 (LERKCSLL). The disordered stretch occupies residues 115–152 (GASLDTRASSHSSSDTFTPSPLNCTMEPATLSPKSMRD). Residues 117 to 134 (SLDTRASSHSSSDTFTPS) are compositionally biased toward low complexity.

It belongs to the bZIP family. As to quaternary structure, homodimer.

The protein localises to the nucleus. In terms of biological role, transcriptional activator involved in the unfolded protein response (UPR) pathway. Recognizes and binds to the UPR element (UPRE) in the promoter of UPR-regulated genes such as KAR2, PDI1, EUG1 and FKB2. Increases the synthesis of endoplasmic reticulum-resident proteins required for protein folding as well as components of the secretory pathway. The polypeptide is Transcriptional activator HAC1 (HAC1) (Saccharomyces cerevisiae (strain ATCC 204508 / S288c) (Baker's yeast)).